The chain runs to 341 residues: Putative MAGE domain-containing protein MAGEA13P (341 aa).

Disordered stretches follow at residues 1 to 21 (MPHS…APKE) and 78 to 101 (KATP…GASQ). The span at 87–97 (ESSRSQEKKDP) shows a compositional bias: basic and acidic residues. The 200-residue stretch at 105 to 304 (LEKKVDELVK…SSFPLLYEEA (200 aa)) folds into the MAGE domain.

The polypeptide is Putative MAGE domain-containing protein MAGEA13P (MAGEA13P) (Homo sapiens (Human)).